Here is a 320-residue protein sequence, read N- to C-terminus: Methylenetetrahydrofolate dehydrogenase [NAD(+)] (320 aa).

Cys-150 is a catalytic residue. NAD(+) is bound by residues 185-186 (RS), 208-209 (DV), and 274-276 (FAC).

The protein belongs to the tetrahydrofolate dehydrogenase/cyclohydrolase family. In terms of assembly, homodimer. In terms of processing, the N-terminus is blocked.

The protein resides in the cytoplasm. It localises to the nucleus. The enzyme catalyses (6R)-5,10-methylene-5,6,7,8-tetrahydrofolate + NAD(+) = (6R)-5,10-methenyltetrahydrofolate + NADH. Its function is as follows. Catalyzes oxidation of cytoplasmic one-carbon units for purine biosynthesis. The sequence is that of Methylenetetrahydrofolate dehydrogenase [NAD(+)] (MTD1) from Saccharomyces cerevisiae (strain ATCC 204508 / S288c) (Baker's yeast).